We begin with the raw amino-acid sequence, 458 residues long: tRNA modification GTPase MnmE (458 aa).

The (6S)-5-formyl-5,6,7,8-tetrahydrofolate site is built by arginine 22, glutamate 84, and arginine 123. The 160-residue stretch at glycine 220 to phenylalanine 379 folds into the TrmE-type G domain. Asparagine 230 lines the K(+) pocket. GTP-binding positions include asparagine 230–serine 235, threonine 249–threonine 255, and aspartate 274–glycine 277. Position 234 (serine 234) interacts with Mg(2+). K(+) contacts are provided by threonine 249, isoleucine 251, and threonine 254. Threonine 255 is a binding site for Mg(2+). (6S)-5-formyl-5,6,7,8-tetrahydrofolate is bound at residue lysine 458.

It belongs to the TRAFAC class TrmE-Era-EngA-EngB-Septin-like GTPase superfamily. TrmE GTPase family. Homodimer. Heterotetramer of two MnmE and two MnmG subunits. It depends on K(+) as a cofactor.

It localises to the cytoplasm. In terms of biological role, exhibits a very high intrinsic GTPase hydrolysis rate. Involved in the addition of a carboxymethylaminomethyl (cmnm) group at the wobble position (U34) of certain tRNAs, forming tRNA-cmnm(5)s(2)U34. The chain is tRNA modification GTPase MnmE from Bacillus cytotoxicus (strain DSM 22905 / CIP 110041 / 391-98 / NVH 391-98).